The chain runs to 614 residues: Phosphomethylpyrimidine synthase (614 aa).

Substrate contacts are provided by residues Asn226, Met255, Tyr284, His320, 340 to 342 (SRG), 381 to 384 (DGLR), and Glu420. His424 lines the Zn(2+) pocket. Substrate is bound at residue Tyr447. His488 serves as a coordination point for Zn(2+). [4Fe-4S] cluster contacts are provided by Cys568, Cys571, and Cys576.

The protein belongs to the ThiC family. Homodimer. [4Fe-4S] cluster serves as cofactor.

The catalysed reaction is 5-amino-1-(5-phospho-beta-D-ribosyl)imidazole + S-adenosyl-L-methionine = 4-amino-2-methyl-5-(phosphooxymethyl)pyrimidine + CO + 5'-deoxyadenosine + formate + L-methionine + 3 H(+). Its pathway is cofactor biosynthesis; thiamine diphosphate biosynthesis. Functionally, catalyzes the synthesis of the hydroxymethylpyrimidine phosphate (HMP-P) moiety of thiamine from aminoimidazole ribotide (AIR) in a radical S-adenosyl-L-methionine (SAM)-dependent reaction. In Acidovorax sp. (strain JS42), this protein is Phosphomethylpyrimidine synthase.